Here is a 233-residue protein sequence, read N- to C-terminus: Small ribosomal subunit protein uS3 (233 aa).

One can recognise a KH type-2 domain in the interval 39-107 (VRTFLTKELK…PAQINISEVR (69 aa)).

It belongs to the universal ribosomal protein uS3 family. As to quaternary structure, part of the 30S ribosomal subunit. Forms a tight complex with proteins S10 and S14.

Functionally, binds the lower part of the 30S subunit head. Binds mRNA in the 70S ribosome, positioning it for translation. This is Small ribosomal subunit protein uS3 from Pseudoalteromonas translucida (strain TAC 125).